Here is a 462-residue protein sequence, read N- to C-terminus: uncharacterized protein (462 aa).

The region spanning 22–90 (KPIYKALAGQ…VGSGTFVSYD (69 aa)) is the HTH gntR-type domain. The H-T-H motif DNA-binding region spans 50–69 (QRELADYLDLNVSTISKAFK). Residue lysine 308 is modified to N6-(pyridoxal phosphate)lysine.

It in the C-terminal section; belongs to the class-I pyridoxal-phosphate-dependent aminotransferase family. Pyridoxal 5'-phosphate serves as cofactor.

This is an uncharacterized protein from Bacillus subtilis (strain 168).